The following is a 238-amino-acid chain: Ribonuclease PH (238 aa).

Phosphate is bound by residues arginine 86 and 124-126 (GTR).

The protein belongs to the RNase PH family. As to quaternary structure, homohexameric ring arranged as a trimer of dimers.

It catalyses the reaction tRNA(n+1) + phosphate = tRNA(n) + a ribonucleoside 5'-diphosphate. Its function is as follows. Phosphorolytic 3'-5' exoribonuclease that plays an important role in tRNA 3'-end maturation. Removes nucleotide residues following the 3'-CCA terminus of tRNAs; can also add nucleotides to the ends of RNA molecules by using nucleoside diphosphates as substrates, but this may not be physiologically important. Probably plays a role in initiation of 16S rRNA degradation (leading to ribosome degradation) during starvation. The sequence is that of Ribonuclease PH from Geobacter sulfurreducens (strain ATCC 51573 / DSM 12127 / PCA).